The sequence spans 944 residues: Protein translocase subunit SecA (944 aa).

ATP contacts are provided by residues Gln77, 95–99 (GEGKT), and Asp484. Residues 920–944 (EQEKQTKKKKKKKPHDDETTKVKIG) are disordered. Positions 933-944 (PHDDETTKVKIG) are enriched in basic and acidic residues.

The protein belongs to the SecA family. Monomer and homodimer. Part of the essential Sec protein translocation apparatus which comprises SecA, SecYEG and auxiliary proteins SecDF. Other proteins may also be involved.

It localises to the cell membrane. The protein localises to the cytoplasm. It carries out the reaction ATP + H2O + cellular proteinSide 1 = ADP + phosphate + cellular proteinSide 2.. In terms of biological role, part of the Sec protein translocase complex. Interacts with the SecYEG preprotein conducting channel. Has a central role in coupling the hydrolysis of ATP to the transfer of proteins into and across the cell membrane, serving as an ATP-driven molecular motor driving the stepwise translocation of polypeptide chains across the membrane. This chain is Protein translocase subunit SecA, found in Mycoplasma capricolum subsp. capricolum (strain California kid / ATCC 27343 / NCTC 10154).